The chain runs to 428 residues: Histidine--tRNA ligase (428 aa).

The protein belongs to the class-II aminoacyl-tRNA synthetase family. Homodimer.

The protein localises to the cytoplasm. It carries out the reaction tRNA(His) + L-histidine + ATP = L-histidyl-tRNA(His) + AMP + diphosphate + H(+). The sequence is that of Histidine--tRNA ligase from Pseudomonas entomophila (strain L48).